Consider the following 933-residue polypeptide: Phosphoenolpyruvate carboxylase (933 aa).

Residues His158 and Lys592 contribute to the active site.

The protein belongs to the PEPCase type 1 family. The cofactor is Mg(2+).

It catalyses the reaction oxaloacetate + phosphate = phosphoenolpyruvate + hydrogencarbonate. Functionally, forms oxaloacetate, a four-carbon dicarboxylic acid source for the tricarboxylic acid cycle. The protein is Phosphoenolpyruvate carboxylase of Nitrosomonas eutropha (strain DSM 101675 / C91 / Nm57).